A 138-amino-acid polypeptide reads, in one-letter code: Basic phospholipase A2 DAV-N6 (138 aa).

Positions 1–16 (MRTLWIVAVLLVSVEG) are cleaved as a signal peptide. 7 cysteine pairs are disulfide-bonded: C42/C131, C44/C60, C59/C111, C65/C138, C66/C104, C73/C97, and C91/C102. Ca(2+) contacts are provided by Y43, G45, and G47. H63 is a catalytic residue. D64 is a Ca(2+) binding site. D105 is a catalytic residue.

Ca(2+) serves as cofactor. In terms of tissue distribution, expressed by the venom gland.

The protein resides in the secreted. It carries out the reaction a 1,2-diacyl-sn-glycero-3-phosphocholine + H2O = a 1-acyl-sn-glycero-3-phosphocholine + a fatty acid + H(+). Snake venom phospholipase A2 (PLA2) that inhibits neuromuscular transmission by blocking acetylcholine release from the nerve termini. PLA2 catalyzes the calcium-dependent hydrolysis of the 2-acyl groups in 3-sn-phosphoglycerides. In Deinagkistrodon acutus (Hundred-pace snake), this protein is Basic phospholipase A2 DAV-N6.